The following is a 346-amino-acid chain: Elongation factor Ts (346 aa).

Positions 80-83 (TDFV) are involved in Mg(2+) ion dislocation from EF-Tu.

The protein belongs to the EF-Ts family.

It localises to the cytoplasm. Associates with the EF-Tu.GDP complex and induces the exchange of GDP to GTP. It remains bound to the aminoacyl-tRNA.EF-Tu.GTP complex up to the GTP hydrolysis stage on the ribosome. The protein is Elongation factor Ts (tsf) of Streptococcus pneumoniae (strain ATCC BAA-255 / R6).